We begin with the raw amino-acid sequence, 486 residues long: MAGGADLDEPPRQSDSTTDRKRPADSTHEIGSADVPRDRAGNKTYDISKLEPARKRQRSKSPSGEAAPRKLKRPGARATISEADRKAARERALERERLAREAATADEERQQINDVVKAHYNAVPERGRDWRKTDSRIKGLRSFNNWIKSCIIQKFSPDEDHQPGRGGGPSILVLDMGCGKGGDLGKWQQAPQHVELYVGMDPADVSIDQARDRYRSMSSRGGRGGRGGRGGGRGPARLFEARFHVKDCFGEPISDIDIIRQVGFESGPHGGGRGFDVVSMMFCMHYAFETEQKARQMLKNVAGALRKGGRLIGAIPNSDVISTKVREHNERMVEMKKKQAEAGDGSKKDDGGDAEEGELDEPEVEKSAEWGNDIYRVRFPGKTPEDGIFRPPFGWKYNFFLHEAVEEVPEYVVPWEAFRALAEDYNLELQWHRSFKEIWDQEKDDRTLGPLSERMHVRDRNTGELLVSPEELEAANFYVGFCFYKV.

The segment at 1-92 (MAGGADLDEP…ADRKAARERA (92 aa)) is disordered. Composition is skewed to basic and acidic residues over residues 9-28 (EPPR…DSTH), 35-54 (VPRD…EPAR), and 82-92 (EADRKAARERA). The mRNA cap 0 methyltransferase domain maps to 135 to 486 (SRIKGLRSFN…FYVGFCFYKV (352 aa)). Position 144 to 145 (144 to 145 (NN)) interacts with mRNA. Residues K148, G177, D201, D247, 281–283 (MFC), and Y286 each bind S-adenosyl-L-methionine. Residues 333–351 (VEMKKKQAEAGDGSKKDDG) are compositionally biased toward basic and acidic residues. The segment at 333–365 (VEMKKKQAEAGDGSKKDDGGDAEEGELDEPEVE) is disordered. Residues 352-363 (GDAEEGELDEPE) are compositionally biased toward acidic residues.

The protein belongs to the class I-like SAM-binding methyltransferase superfamily. mRNA cap 0 methyltransferase family.

The protein resides in the nucleus. It carries out the reaction a 5'-end (5'-triphosphoguanosine)-ribonucleoside in mRNA + S-adenosyl-L-methionine = a 5'-end (N(7)-methyl 5'-triphosphoguanosine)-ribonucleoside in mRNA + S-adenosyl-L-homocysteine. Responsible for methylating the 5'-cap structure of mRNAs. This is mRNA cap guanine-N(7) methyltransferase (ABD1) from Pyricularia oryzae (strain 70-15 / ATCC MYA-4617 / FGSC 8958) (Rice blast fungus).